We begin with the raw amino-acid sequence, 345 residues long: Phosphoribosylformylglycinamidine cyclo-ligase (345 aa).

Belongs to the AIR synthase family.

Its subcellular location is the cytoplasm. The catalysed reaction is 2-formamido-N(1)-(5-O-phospho-beta-D-ribosyl)acetamidine + ATP = 5-amino-1-(5-phospho-beta-D-ribosyl)imidazole + ADP + phosphate + H(+). It functions in the pathway purine metabolism; IMP biosynthesis via de novo pathway; 5-amino-1-(5-phospho-D-ribosyl)imidazole from N(2)-formyl-N(1)-(5-phospho-D-ribosyl)glycinamide: step 2/2. This is Phosphoribosylformylglycinamidine cyclo-ligase from Sodalis glossinidius (strain morsitans).